Here is a 126-residue protein sequence, read N- to C-terminus: Fluoride-specific ion channel FluC (126 aa).

Transmembrane regions (helical) follow at residues 4–24 (LLLV…TSAW), 36–56 (GTLL…TASL), 67–85 (LFLA…SFNY), and 101–121 (AYLL…TLLV). Na(+) contacts are provided by Gly-75 and Thr-78.

Belongs to the fluoride channel Fluc/FEX (TC 1.A.43) family.

The protein localises to the cell inner membrane. The enzyme catalyses fluoride(in) = fluoride(out). Its activity is regulated as follows. Na(+) is not transported, but it plays an essential structural role and its presence is essential for fluoride channel function. Its function is as follows. Fluoride-specific ion channel. Important for reducing fluoride concentration in the cell, thus reducing its toxicity. The protein is Fluoride-specific ion channel FluC of Anaeromyxobacter sp. (strain K).